We begin with the raw amino-acid sequence, 1168 residues long: TBC1 domain family member 1 (1168 aa).

Position 146 is a phosphoserine (Ser-146). The segment at 203–238 (VSGSRGSESPRPNPPHAAPTGSQEPVRRPMRKSFSQ) is disordered. The residue at position 235 (Ser-235) is a Phosphoserine; by PKB/AKT1. At Ser-237 the chain carries Phosphoserine. A PID domain is found at 246–404 (FRKELQDGGL…LHKLCERIEG (159 aa)). Ser-503 is modified (phosphoserine). Residue Thr-505 is modified to Phosphothreonine; by PKB/AKT1. Ser-507, Ser-525, and Ser-527 each carry phosphoserine. Residues 532–542 (SSLSSTLSNTS) are compositionally biased toward low complexity. Disordered regions lie at residues 532-551 (SSLSSTLSNTSKEPSVCEKE) and 564-587 (GSSEDLSSDSESHLPEEPAPLSPQ). Ser-565, Ser-566, Ser-570, Ser-571, and Ser-585 each carry phosphoserine. A Phosphothreonine modification is found at Thr-596. Ser-614 carries the phosphoserine modification. Residue Ser-627 is modified to Phosphoserine; by PKB/AKT1. Disordered regions lie at residues 628–658 (VSTETPHERKDFESKANHLGDSGGTPVKTRR) and 678–717 (SSSRYEDYSELGELPPRSPLEPVCEDGPFGPPPEEKKRTS). Positions 632-645 (TPHERKDFESKANH) are enriched in basic and acidic residues. Phosphoserine is present on residues Ser-695 and Ser-941. A Rab-GAP TBC domain is found at 800–994 (GVPRHHRGEI…RVFDMIFLQG (195 aa)). Tyr-952 is subject to Phosphotyrosine. Thr-1131 is subject to Phosphothreonine. Positions 1145-1159 (ELRRRSAEPSDREPE) are enriched in basic and acidic residues. Residues 1145-1168 (ELRRRSAEPSDREPECTQPEPTGD) are disordered.

Interacts with APPL2 (via BAR domain); interaction is dependent of TBC1D1 phosphorylation at Ser-235; interaction diminishes the phosphorylation of TBC1D1 at Thr-596, resulting in inhibition of SLC2A4/GLUT4 translocation and glucose uptake. In terms of processing, insulin-stimulated phosphorylation by AKT family kinases stimulates SLC2A4/GLUT4 translocation.

It is found in the nucleus. Its function is as follows. May act as a GTPase-activating protein for Rab family protein(s). May play a role in the cell cycle and differentiation of various tissues. Involved in the trafficking and translocation of GLUT4-containing vesicles and insulin-stimulated glucose uptake into cells. This Homo sapiens (Human) protein is TBC1 domain family member 1 (TBC1D1).